The sequence spans 355 residues: U5 small nuclear ribonucleoprotein 40 kDa protein (355 aa).

WD repeat units follow at residues 60–99 (GHKG…INYS), 103–142 (GHKG…LIKR), 145–185 (EHSG…STHL), 187–226 (QHKY…DPLY), 230–269 (SHQD…PPNR), 280–319 (NFEK…LQYC), and 322–355 (GHSG…EIKP).

In terms of assembly, component of the pre-catalytic and catalytic spliceosome complexes. Component of the postcatalytic spliceosome P complex. Part of the U5 snRNP complex. Component of the U4/U6-U5 tri-snRNP complex.

Its subcellular location is the nucleus. Functionally, required for pre-mRNA splicing as component of the activated spliceosome. Component of the U5 small nuclear ribonucleoprotein (snRNP) complex and the U4/U6-U5 tri-snRNP complex, building blocks of the spliceosome. The chain is U5 small nuclear ribonucleoprotein 40 kDa protein (snrnp40) from Dictyostelium discoideum (Social amoeba).